The chain runs to 1174 residues: Male determiner protein Mdmd(Y) (1174 aa).

Residues 1-15 (MNATDAESRKPENKP) are compositionally biased toward basic and acidic residues. 3 disordered regions span residues 1–51 (MNAT…SGQR), 79–109 (RKDG…HPVE), and 136–259 (KQLS…LRRS). Over residues 16-35 (SSESSSSGSTSGSSDGEVSS) the composition is skewed to low complexity. The span at 36-47 (KTYFKNNKSKVL) shows a compositional bias: polar residues. Positions 79-92 (RKDGSNEMLPKEDS) are enriched in basic and acidic residues. The span at 138 to 153 (LSAYRSRSRSTRLSYS) shows a compositional bias: low complexity. Residues 167–180 (SRYKKSVLRNRRTS) show a composition bias toward basic residues. Basic and acidic residues predominate over residues 183–200 (HGRDSSTTKRSVSRDKDN). The segment covering 201–223 (RLRRRIGSSRSHTRSHSRFRRSE) has biased composition (basic residues). Basic and acidic residues predominate over residues 235 to 259 (RSQERRHERRRSMSSDYERIALRRS). One can recognise an MIF4G domain in the interval 348 to 531 (KKYIHGYINK…KVLFQVRRDG (184 aa)). The segment covering 597–608 (DSDGSFGSGSNS) has biased composition (low complexity). The disordered stretch occupies residues 597–616 (DSDGSFGSGSNSETALSDCD). In terms of domain architecture, MI spans 641–757 (ALRRTIYLTL…SWDVLDCIKL (117 aa)). The span at 840–857 (SAPSSSSSSSLSSELSAP) shows a compositional bias: low complexity. Disordered regions lie at residues 840 to 1045 (SAPS…SRTK) and 1089 to 1135 (KGGP…SREY). 2 stretches are compositionally biased toward basic residues: residues 869–886 (KKKH…KNPS) and 895–909 (IVGK…KTIK). The segment covering 910–924 (RRTDKDNSSSKDNFL) has biased composition (basic and acidic residues). The span at 926–957 (SESSSNESISLDSLSSELFAPSSYSSSESSND) shows a compositional bias: low complexity. Basic residues predominate over residues 963-1001 (KHKGKNKKMTKKKNPSNKREKTKKKLSKNKKAPNKNTKK). The span at 1010–1020 (SSESSISESKS) shows a compositional bias: low complexity. Over residues 1034–1045 (RKKRVTSKSRTK) the composition is skewed to basic residues. The span at 1089-1118 (KGGPNCRKDNYGNRQNHEISQRHDSEIKRR) shows a compositional bias: basic and acidic residues. A compositionally biased stretch (basic residues) spans 1119 to 1130 (REERKKRHHEKN).

The protein belongs to the CWC22 family. In terms of assembly, component of the spliceosome C complex.

The protein resides in the nucleus speckle. Functionally, male determiner protein (M-factor) that controls male somatic sexual differentiation. Acts as a dominant factor that regulates the mRNA splicing of transformer (tra) and doublesex (dsx) transcripts and promotes expression of male splice forms of tra and dsx. Probably acts as a component of the spliceosome C complex required for mRNA splicing factor and exon-junction complex (EJC) assembly. Hinders eIF4AIII from non-specifically binding RNA and escorts it to the splicing machinery to promote EJC assembly on mature mRNAs. The polypeptide is Male determiner protein Mdmd(Y) (Musca domestica (House fly)).